A 735-amino-acid polypeptide reads, in one-letter code: Ion-translocating oxidoreductase complex subunit C (735 aa).

4Fe-4S ferredoxin-type domains follow at residues 368-397 (MGAP…QQLY) and 407-436 (KATA…VQYF). Residues Cys377, Cys380, Cys383, Cys387, Cys416, Cys419, Cys422, and Cys426 each coordinate [4Fe-4S] cluster. The interval 538–715 (KQAAHPMADS…PADPRKAAVA (178 aa)) is disordered. A compositionally biased stretch (low complexity) spans 556–565 (KAAVEAAIAR).

The protein belongs to the 4Fe4S bacterial-type ferredoxin family. RnfC subfamily. As to quaternary structure, the complex is composed of six subunits: RsxA, RsxB, RsxC, RsxD, RsxE and RsxG. [4Fe-4S] cluster is required as a cofactor.

The protein resides in the cell inner membrane. Functionally, part of a membrane-bound complex that couples electron transfer with translocation of ions across the membrane. Required to maintain the reduced state of SoxR. The protein is Ion-translocating oxidoreductase complex subunit C of Salmonella typhimurium (strain LT2 / SGSC1412 / ATCC 700720).